We begin with the raw amino-acid sequence, 116 residues long: Endoribonuclease toxin ChpB (116 aa).

This sequence belongs to the PemK/MazF family. As to quaternary structure, homodimer, interacts with ChpS, which inhibits the endoribonuclease activity.

Stimulated in vitro in a concentration-dependent fashion by extracellular death factor (EDF, a quorum sensing pentapeptide sequence NNWNN, probably produced from the zwf gene product glucose-6-phosphate 1-dehydrogenase), which is able to overcome inhibition by cognate antitoxin ChpS. In terms of biological role, toxic component of a type II toxin-antitoxin (TA) system. ChpB is a sequence-specific mRNA and (weak) tmRNA endoribonuclease that inhibits protein synthesis and induces bacterial stasis. Cleavage is independent of the ribosome. Cleavage occurs at ACY sequences where Y is not C. The endoribonuclease activity is not as strong as that of MazF. The endoribonuclease activity (a toxin) is inhibited by its labile cognate antitoxin ChpS. Toxicity results when the levels of ChpS decrease in the cell, leading to mRNA degradation. Both ChpS and ChpB probably bind to the promoter region of the chpS-chpB operon to autoregulate their synthesis. This Escherichia coli (strain K12) protein is Endoribonuclease toxin ChpB (chpB).